A 334-amino-acid polypeptide reads, in one-letter code: G-protein coupled receptor 12 (334 aa).

Over 1–48 (MNEDLKVNLSGLPRDYLDAAAAENISAAVSSRVPAVEPEPELVVNPWD) the chain is Extracellular. 2 N-linked (GlcNAc...) asparagine glycosylation sites follow: Asn8 and Asn24. A helical membrane pass occupies residues 49–69 (IVLCTSGTLISCENAIVVLII). Residues 70–77 (FHNPSLRA) are Cytoplasmic-facing. A helical membrane pass occupies residues 78-98 (PMFLLIGSLALADLLAGIGLI). At 99 to 113 (TNFVFAYLLQSEATK) the chain is on the extracellular side. A helical transmembrane segment spans residues 114–134 (LVTIGLIVASFSASVCSLLAI). The Cytoplasmic portion of the chain corresponds to 135 to 158 (TVDRYLSLYYALTYHSERTVTFTY). A helical transmembrane segment spans residues 159 to 179 (VMLVMLWGTSICLGLLPVMGW). Residues 180–199 (NCLRDESTCSVVRPLTKNNA) lie on the Extracellular side of the membrane. A helical membrane pass occupies residues 200–220 (AILSVSFLFMFALMLQLYIQI). At 221 to 252 (CKIVMRHAHQIALQHHFLATSHYVTTRKGVST) the chain is on the cytoplasmic side. A helical transmembrane segment spans residues 253–273 (LAIILGTFAACWMPFTLYSLI). Over 274–282 (ADYTYPSIY) the chain is Extracellular. A helical transmembrane segment spans residues 283–303 (TYATLLPATYNSIINPVIYAF). Residues 304-334 (RNQEIQKALCLICCGCIPSSLAQRARSPSDV) lie on the Cytoplasmic side of the membrane. The S-palmitoyl cysteine moiety is linked to residue Cys317. Phosphoserine is present on residues Ser330 and Ser332.

This sequence belongs to the G-protein coupled receptor 1 family.

It localises to the cell membrane. In terms of biological role, promotes neurite outgrowth and blocks myelin inhibition in neurons. Receptor with constitutive G(s) signaling activity that stimulates cyclic AMP production. The protein is G-protein coupled receptor 12 (GPR12) of Homo sapiens (Human).